The following is a 254-amino-acid chain: Cyclin homolog (254 aa).

This sequence belongs to the cyclin family. Cyclin D subfamily.

May be highly relevant to the process of cellular transformation and rapid T-cell proliferation effected by HVS during latent infections of T-cells in susceptible hosts. In Saimiriine herpesvirus 2 (strain 11) (SaHV-2), this protein is Cyclin homolog (72).